The chain runs to 311 residues: Meteorin-like protein (311 aa).

The N-terminal stretch at 1-45 (MRGAVWAARRRAGQQWPRSPGPGPGPPPPPPLLLLLLLLLGGASA) is a signal peptide. Cys52 and Cys75 are disulfide-bonded. N-linked (GlcNAc...) asparagine glycosylation occurs at Asn103. Intrachain disulfides connect Cys107-Cys143, Cys188-Cys260, Cys191-Cys284, and Cys201-Cys306.

Belongs to the meteorin family. Post-translationally, N-glycosylated. Highly expressed in subcutaneous adipose tissue.

It is found in the secreted. Hormone induced following exercise or cold exposure that promotes energy expenditure. Induced either in the skeletal muscle after exercise or in adipose tissue following cold exposure and is present in the circulation. Able to stimulate energy expenditure associated with the browning of the white fat depots and improves glucose tolerance. Does not promote an increase in a thermogenic gene program via direct action on adipocytes, but acts by stimulating several immune cell subtypes to enter the adipose tissue and activate their prothermogenic actions. Stimulates an eosinophil-dependent increase in IL4 expression and promotes alternative activation of adipose tissue macrophages, which are required for the increased expression of the thermogenic and anti-inflammatory gene programs in fat. Required for some cold-induced thermogenic responses, suggesting a role in metabolic adaptations to cold temperatures. This Mus musculus (Mouse) protein is Meteorin-like protein (Metrnl).